We begin with the raw amino-acid sequence, 543 residues long: CTP synthase (543 aa).

An amidoligase domain region spans residues 1–265 (MARYIFITGG…DDEVLAAFAI (265 aa)). S13 is a binding site for CTP. A UTP-binding site is contributed by S13. 14 to 19 (SLGKGL) lines the ATP pocket. Position 54 (Y54) interacts with L-glutamine. D71 lines the ATP pocket. D71 and E139 together coordinate Mg(2+). CTP is bound by residues 146 to 148 (DIE), 186 to 191 (KTKPTQ), and K222. UTP contacts are provided by residues 186-191 (KTKPTQ) and K222. Position 238–240 (238–240 (RDA)) interacts with ATP. The Glutamine amidotransferase type-1 domain maps to 291 to 542 (TIAIVGKYTG…IEAALVRSRL (252 aa)). An L-glutamine-binding site is contributed by G353. The Nucleophile; for glutamine hydrolysis role is filled by C380. L-glutamine contacts are provided by residues 381 to 384 (FGMQ), E404, and R470. Active-site residues include H515 and E517.

It belongs to the CTP synthase family. Homotetramer.

The catalysed reaction is UTP + L-glutamine + ATP + H2O = CTP + L-glutamate + ADP + phosphate + 2 H(+). The enzyme catalyses L-glutamine + H2O = L-glutamate + NH4(+). It carries out the reaction UTP + NH4(+) + ATP = CTP + ADP + phosphate + 2 H(+). The protein operates within pyrimidine metabolism; CTP biosynthesis via de novo pathway; CTP from UDP: step 2/2. With respect to regulation, allosterically activated by GTP, when glutamine is the substrate; GTP has no effect on the reaction when ammonia is the substrate. The allosteric effector GTP functions by stabilizing the protein conformation that binds the tetrahedral intermediate(s) formed during glutamine hydrolysis. Inhibited by the product CTP, via allosteric rather than competitive inhibition. Catalyzes the ATP-dependent amination of UTP to CTP with either L-glutamine or ammonia as the source of nitrogen. Regulates intracellular CTP levels through interactions with the four ribonucleotide triphosphates. The sequence is that of CTP synthase from Rhodopseudomonas palustris (strain BisB5).